A 648-amino-acid polypeptide reads, in one-letter code: Chaperone protein HtpG (648 aa).

The tract at residues 1-349 (MTTEHAAGAQ…SSDLPLNVSR (349 aa)) is a; substrate-binding. The interval 350 to 570 (EILQESKDID…EHDVGMNLAR (221 aa)) is b. The interval 571–648 (ILKAAGQQAP…MAMGGSAGTD (78 aa)) is c.

It belongs to the heat shock protein 90 family. Homodimer.

The protein localises to the cytoplasm. Molecular chaperone. Has ATPase activity. The sequence is that of Chaperone protein HtpG from Aromatoleum aromaticum (strain DSM 19018 / LMG 30748 / EbN1) (Azoarcus sp. (strain EbN1)).